Consider the following 556-residue polypeptide: Oxygen-dependent choline dehydrogenase (556 aa).

4 to 33 serves as a coordination point for FAD; the sequence is DYIIIGAGSAGNVLATRLTEDPNTTVLLLE. H473 (proton acceptor) is an active-site residue.

Belongs to the GMC oxidoreductase family. FAD is required as a cofactor.

The enzyme catalyses choline + A = betaine aldehyde + AH2. The catalysed reaction is betaine aldehyde + NAD(+) + H2O = glycine betaine + NADH + 2 H(+). Its pathway is amine and polyamine biosynthesis; betaine biosynthesis via choline pathway; betaine aldehyde from choline (cytochrome c reductase route): step 1/1. Functionally, involved in the biosynthesis of the osmoprotectant glycine betaine. Catalyzes the oxidation of choline to betaine aldehyde and betaine aldehyde to glycine betaine at the same rate. This is Oxygen-dependent choline dehydrogenase from Escherichia coli O127:H6 (strain E2348/69 / EPEC).